The chain runs to 550 residues: Chaperonin GroEL (550 aa).

ATP is bound by residues 30 to 33, Lys-51, 87 to 91, Gly-415, and Asp-497; these read TLGP and DGTTT.

It belongs to the chaperonin (HSP60) family. As to quaternary structure, forms a cylinder of 14 subunits composed of two heptameric rings stacked back-to-back. Interacts with the co-chaperonin GroES.

Its subcellular location is the cytoplasm. It catalyses the reaction ATP + H2O + a folded polypeptide = ADP + phosphate + an unfolded polypeptide.. In terms of biological role, together with its co-chaperonin GroES, plays an essential role in assisting protein folding. The GroEL-GroES system forms a nano-cage that allows encapsulation of the non-native substrate proteins and provides a physical environment optimized to promote and accelerate protein folding. The protein is Chaperonin GroEL of Yersinia enterocolitica.